The primary structure comprises 816 residues: Protein kinase C-binding protein NELL2 (816 aa).

The first 21 residues, 1-21 (MESRVLLRTFCLIFGLGAVWG), serve as a signal peptide directing secretion. N-linked (GlcNAc...) asparagine glycans are attached at residues asparagine 53, asparagine 225, asparagine 293, and asparagine 298. Positions 64–228 (PRSVKASTAT…AQCPDLNRTC (165 aa)) constitute a Laminin G-like domain. The VWFC 1 domain maps to 272–331 (RTCTMKGTTYREFESWIDGCKNCTCLNGTIQCETLICPNPDCPLNSALAYVDGKCCKECK). In terms of domain architecture, EGF-like 1 spans 397–439 (GYDFCSERHNCMENSVCRNLNDRAVCSCRDGFRALREDNAYCE). Intrachain disulfides connect cysteine 401–cysteine 413, cysteine 407–cysteine 422, and cysteine 424–cysteine 438. Ca(2+) contacts are provided by aspartate 440, isoleucine 441, and glutamate 443. Positions 440–481 (DIDECAEGRHYCRENTMCVNTPGSFMCICKTGYIRIDDYSCT) constitute an EGF-like 2; calcium-binding domain. 9 cysteine pairs are disulfide-bonded: cysteine 444–cysteine 457, cysteine 451–cysteine 466, cysteine 468–cysteine 480, cysteine 486–cysteine 499, cysteine 493–cysteine 508, cysteine 510–cysteine 521, cysteine 525–cysteine 535, cysteine 529–cysteine 541, and cysteine 543–cysteine 552. Residues asparagine 459, threonine 460, and serine 463 each contribute to the Ca(2+) site. The EGF-like 3; calcium-binding domain occupies 482–522 (EHDECITNQHNCDENALCFNTVGGHNCVCKPGYTGNGTTCK). An N-linked (GlcNAc...) asparagine glycan is attached at asparagine 517. The 31-residue stretch at 523–553 (AFCKDGCRNGGACIAANVCACPQGFTGPSCE) folds into the EGF-like 4 domain. Threonine 548 carries O-linked (GlcNAc...) threonine glycosylation. Aspartate 555, isoleucine 556, and glutamate 558 together coordinate Ca(2+). One can recognise an EGF-like 5; calcium-binding domain in the interval 555 to 601 (DIDECSDGFVQCDSRANCINLPGWYHCECRDGYHDNGMFSPSGESCE). 3 cysteine pairs are disulfide-bonded: cysteine 559-cysteine 572, cysteine 566-cysteine 581, and cysteine 583-cysteine 600. The Ca(2+) site is built by asparagine 574, leucine 575, and tryptophan 578. Ca(2+) is bound by residues aspartate 602, isoleucine 603, and glutamate 605. Positions 602–637 (DIDECGTGRHSCANDTICFNLDGGYDCRCPHGKNCT) constitute an EGF-like 6; calcium-binding domain. Cystine bridges form between cysteine 606–cysteine 619, cysteine 613–cysteine 628, and cysteine 630–cysteine 636. An N-linked (GlcNAc...) asparagine glycan is attached at asparagine 615. Residues asparagine 621, leucine 622, and glycine 625 each contribute to the Ca(2+) site. N-linked (GlcNAc...) asparagine glycosylation is present at asparagine 635. 2 VWFC domains span residues 638-693 (GDCI…PECD) and 698-756 (SQCL…PRCV).

As to quaternary structure, homotrimer. Binds to PRKCB. Interacts with NICOL1; this interaction triggers epididymal differentiation.

It localises to the secreted. Plays multiple roles in neural tissues, regulates neuronal proliferation, survival, differentiation, polarization, as well as axon guidance and synaptic functions. Plays an important role in axon development during neuronal differentiation through the MAPK intracellular signaling pathway. Via binding to its receptor ROBO3, plays a role in axon guidance, functions as a repulsive guidance cue for commissural axons, helping to steer them across the spinal cord midline. Required for neuron survival through the modulation of MAPK signaling pathways too. Involved in the regulation of hypothalamic GNRH secretion and the control of puberty. Its function is as follows. Testicular luminal protein that signals through a ROS1-pathway to regulate the epididymal initial segment (IS) maturation, sperm maturation and male fertility. In Pongo abelii (Sumatran orangutan), this protein is Protein kinase C-binding protein NELL2 (NELL2).